The chain runs to 312 residues: MSSSGSSHPFLLTGFPGLEEAHHWISVFFLFMYISILFGNGTLLLLIKEDHNLHEPMYFFLAMLAATDLGLALTTMPTVLGVLWLDHREIGSAACFSQAYFIHSLSFLESGILLAMAYDRFIAICNPLRYTSVLTNTRVVKIGLGVLMRGFVSVVPPIRPLYFFLYCHSHVLSHAFCLHQDVIKLACADTTFNRLYPAVLVVFIFVLDYLIIFISYVLILKTVLSIASREERAKALITCVSHICCVLVFYVTVIGLSLIHRFGKQVPHIVHLIMSYAYFLFPPLMNPITYSVKTKQIQNAILHLFTTHRIGT.

At 1–23 (MSSSGSSHPFLLTGFPGLEEAHH) the chain is on the extracellular side. A helical membrane pass occupies residues 24–44 (WISVFFLFMYISILFGNGTLL). The Cytoplasmic portion of the chain corresponds to 45–52 (LLIKEDHN). Residues 53–73 (LHEPMYFFLAMLAATDLGLAL) form a helical membrane-spanning segment. The Extracellular portion of the chain corresponds to 74–97 (TTMPTVLGVLWLDHREIGSAACFS). C95 and C187 are oxidised to a cystine. A helical transmembrane segment spans residues 98-118 (QAYFIHSLSFLESGILLAMAY). Residues 119–137 (DRFIAICNPLRYTSVLTNT) are Cytoplasmic-facing. A helical transmembrane segment spans residues 138–158 (RVVKIGLGVLMRGFVSVVPPI). Topologically, residues 159-194 (RPLYFFLYCHSHVLSHAFCLHQDVIKLACADTTFNR) are extracellular. A helical transmembrane segment spans residues 195–215 (LYPAVLVVFIFVLDYLIIFIS). Topologically, residues 216–235 (YVLILKTVLSIASREERAKA) are cytoplasmic. The helical transmembrane segment at 236–256 (LITCVSHICCVLVFYVTVIGL) threads the bilayer. Topologically, residues 257–271 (SLIHRFGKQVPHIVH) are extracellular. The chain crosses the membrane as a helical span at residues 272 to 292 (LIMSYAYFLFPPLMNPITYSV). The Cytoplasmic segment spans residues 293 to 312 (KTKQIQNAILHLFTTHRIGT).

Belongs to the G-protein coupled receptor 1 family.

The protein localises to the cell membrane. Odorant receptor. The protein is Olfactory receptor 51B5 (OR51B5) of Homo sapiens (Human).